Here is a 926-residue protein sequence, read N- to C-terminus: ABC transporter A family member 6 (926 aa).

The next 6 membrane-spanning stretches (helical) occupy residues 34–54, 336–356, 389–409, 418–438, 451–471, and 525–545; these read LIVI…VFDS, ASLI…PVIL, FLAI…AIGL, TIQF…AFLV, VAYI…QFLI, and DEVF…TYYI. In terms of domain architecture, ABC transporter spans 610–847; sequence IVCDNLKKVY…YGGSYVLTIT (238 aa). Position 648–655 (648–655) interacts with ATP; sequence GPNGAGKT.

This sequence belongs to the ABC transporter superfamily. ABCA family. CPR flippase (TC 3.A.1.211) subfamily.

The protein resides in the membrane. This is ABC transporter A family member 6 (ABCA6) from Arabidopsis thaliana (Mouse-ear cress).